A 601-amino-acid chain; its full sequence is Glutathione-regulated potassium-efflux system protein KefB (601 aa).

13 helical membrane-spanning segments follow: residues 4–24, 29–49, 55–75, 87–107, 115–135, 152–172, 177–197, 207–227, 230–250, 262–282, 284–304, 324–344, and 356–376; these read SDLL…VPLA, IGAV…GLGF, EILH…GLEL, IFGV…GLLM, AAVI…LQLM, VLLF…LLAG, HFDW…LIGG, FIAD…LVLG, LFMD…GVLL, AIDP…GMSL, LGVL…LVAV, MQFA…FSTA, and SLLL…MKLV. One can recognise an RCK N-terminal domain in the interval 400-519; it reads KPQVIVVGFG…AGVTQFSRET (120 aa).

It belongs to the monovalent cation:proton antiporter 2 (CPA2) transporter (TC 2.A.37) family. KefB subfamily. Interacts with the regulatory subunit KefG.

The protein localises to the cell inner membrane. In terms of biological role, pore-forming subunit of a potassium efflux system that confers protection against electrophiles. Catalyzes K(+)/H(+) antiport. This Citrobacter koseri (strain ATCC BAA-895 / CDC 4225-83 / SGSC4696) protein is Glutathione-regulated potassium-efflux system protein KefB.